The following is a 159-amino-acid chain: Ribosome maturation factor RimP (159 aa).

The protein belongs to the RimP family.

It is found in the cytoplasm. Functionally, required for maturation of 30S ribosomal subunits. The protein is Ribosome maturation factor RimP of Streptococcus pneumoniae serotype 19F (strain G54).